A 257-amino-acid polypeptide reads, in one-letter code: Deoxyribose-phosphate aldolase (257 aa).

D102 acts as the Proton donor/acceptor in catalysis. K166 (schiff-base intermediate with acetaldehyde) is an active-site residue. The active-site Proton donor/acceptor is the K198.

It belongs to the DeoC/FbaB aldolase family. DeoC type 2 subfamily.

Its subcellular location is the cytoplasm. It carries out the reaction 2-deoxy-D-ribose 5-phosphate = D-glyceraldehyde 3-phosphate + acetaldehyde. The protein operates within carbohydrate degradation; 2-deoxy-D-ribose 1-phosphate degradation; D-glyceraldehyde 3-phosphate and acetaldehyde from 2-deoxy-alpha-D-ribose 1-phosphate: step 2/2. Functionally, catalyzes a reversible aldol reaction between acetaldehyde and D-glyceraldehyde 3-phosphate to generate 2-deoxy-D-ribose 5-phosphate. The protein is Deoxyribose-phosphate aldolase of Aeromonas salmonicida (strain A449).